The following is a 28-amino-acid chain: M-ectatotoxin-Eb2c (28 aa).

As to expression, expressed by the venom gland.

It localises to the secreted. Antimicrobial peptide active against Gram-negative bacterium E.coli MH1 (MIC=3.5 uM) and P.aeruginosa PAO1 (MIC=10 uM) and against Gram-positive bacterium A.globiformis VKM Ac-1112 (MIC=1.25 uM). The protein is M-ectatotoxin-Eb2c of Ectatomma brunneum (Ant).